The following is a 101-amino-acid chain: uncharacterized protein (101 aa).

The N-terminal stretch at 1-23 (MERRTGVVLIIFVTFCEAMMARA) is a signal peptide. The chain crosses the membrane as a helical span at residues 38–58 (FLLFIIHTSCTMVAFIIGNLA).

The protein localises to the host membrane. This is an uncharacterized protein from Cryphonectria parasitica (Chestnut blight fungus).